Reading from the N-terminus, the 134-residue chain is Profilin-4 (134 aa).

An intrachain disulfide couples C13 to C118. The short motif at 84–100 (AVIRGKKGSGGITIKKT) is the Involved in PIP2 interaction element. T114 is modified (phosphothreonine).

This sequence belongs to the profilin family. Occurs in many kinds of cells as a complex with monomeric actin in a 1:1 ratio. In terms of processing, phosphorylated by MAP kinases.

It is found in the cytoplasm. The protein localises to the cytoskeleton. Its function is as follows. Binds to actin and affects the structure of the cytoskeleton. At high concentrations, profilin prevents the polymerization of actin, whereas it enhances it at low concentrations. The protein is Profilin-4 of Olea europaea (Common olive).